Reading from the N-terminus, the 248-residue chain is tRNA (guanine-N(1)-)-methyltransferase (248 aa).

Residues Gly-113 and 133-138 (IGDYVL) each bind S-adenosyl-L-methionine.

This sequence belongs to the RNA methyltransferase TrmD family. In terms of assembly, homodimer.

Its subcellular location is the cytoplasm. It catalyses the reaction guanosine(37) in tRNA + S-adenosyl-L-methionine = N(1)-methylguanosine(37) in tRNA + S-adenosyl-L-homocysteine + H(+). Functionally, specifically methylates guanosine-37 in various tRNAs. The polypeptide is tRNA (guanine-N(1)-)-methyltransferase (Shewanella denitrificans (strain OS217 / ATCC BAA-1090 / DSM 15013)).